Reading from the N-terminus, the 468-residue chain is Transmembrane protein 151B (468 aa).

The tract at residues 1-25 (MPEDGGGDSGDVPEIIPDGEPLREE) is disordered. A run of 2 helical transmembrane segments spans residues 45–65 (CLLL…CRLA) and 98–118 (YLYI…AECW). Residues 384–438 (VSSNSLPPARPSGPRLPFSRSRLSLGAGGRATPGVFRSLSGGPLGRRGEDTEPLE) are disordered.

This sequence belongs to the TMEM151 family.

Its subcellular location is the membrane. This Bos taurus (Bovine) protein is Transmembrane protein 151B (TMEM151B).